Here is a 33-residue protein sequence, read N- to C-terminus: QLHPQDLPHLMTDLSKKKGPWQEEDAAYGWMDF.

Glutamine 1 bears the Pyrrolidone carboxylic acid mark. The residue at position 28 (tyrosine 28) is a Sulfotyrosine. Phenylalanine amide is present on phenylalanine 33.

The protein belongs to the gastrin/cholecystokinin family. Post-translationally, sulfation enhances proteolytic processing, and blocks peptide degradation. Levels of sulfation differ between proteolytically-cleaved gastrins and between tissues.

Its subcellular location is the secreted. In terms of biological role, gastrin stimulates the stomach mucosa to produce and secrete hydrochloric acid and the pancreas to secrete its digestive enzymes. It also stimulates smooth muscle contraction and increases blood circulation and water secretion in the stomach and intestine. The sequence is that of Gastrin (GAST) from Macropus giganteus (Eastern gray kangaroo).